Here is a 250-residue protein sequence, read N- to C-terminus: 5-oxoprolinase subunit A (250 aa).

Belongs to the LamB/PxpA family. In terms of assembly, forms a complex composed of PxpA, PxpB and PxpC.

The enzyme catalyses 5-oxo-L-proline + ATP + 2 H2O = L-glutamate + ADP + phosphate + H(+). Its function is as follows. Catalyzes the cleavage of 5-oxoproline to form L-glutamate coupled to the hydrolysis of ATP to ADP and inorganic phosphate. The polypeptide is 5-oxoprolinase subunit A (Paraburkholderia phytofirmans (strain DSM 17436 / LMG 22146 / PsJN) (Burkholderia phytofirmans)).